The sequence spans 1842 residues: MDSETIDMCVKFLKISFGLQSLKNLVKELFGGSELEKLAYVHAAFFHANEMAIHWNADLPWEEVMSSKRIKERFGYVKSHFLRNVVYNADASGQMIRYNTTTCEQWFCCNFNLASYSASYNSLVPEEGGSMPINEEAEIKIGQSLLTCAQSVTKAIYAKLSTLTTRSIQGFLECLRDAICGAFSSWLPCIRGAFAWFGNIIEVLKHWAGAAHEKLHNFLEGIEECLYMGLGLVASTCIVALIEKFLVTMSVISGPCGRPTLFLTSAMAIISSTYLLSKAVEKSSAFTMLLGFVTQSCQTVLGSLFGKSAKGSEEAQGQFGPSAMLESLATLVSSWSSSSVTEIGRTFGAISQIKNGIIALKDMALFVFSKLCEMASKVLGFESQILADLSIILGENVADWLDECDCMLAYLLEFNSNARDIFDRLSQLIEKGKAIRMGILRTTHRGPSQVLSLVTKALDKLTELHNSVIMSGANSTRKTPFMLFFTGKSGVGKTSVVQRMAANWLQQEQLGSNEVYSRNGLDPFWSGYKRQAVVTYDDFGAVPGSVSNEAEIINVVSSNPHSVMMADLKEKGMYFDSRLIIASSNFLAANPESGVHDSEAYERRRHVVVQVSLKEDMAYDPGNPCANQRYTLLESKAPFAEKAVFESYEELWSHVYNAFKAHEEKEKLFLSSLPIPERSEKEALQALIGICVMTTSYAPKAVIQYGIDHLVGYHYLISSAEHVYFWHEKGEVEIVPMHLMKLDKMDKATMASTSLKSALMCQDMAKNFPTLNPLAVLYAKNIVIRGWVDANLQASKKCEDSYMREQIESLPKWQRAYLHVLSGHIASNETRGWFLNCLEVTKSNSRSSYIWEYKSWPMPLKLALGSFLAILAGSAIFCSLQSLWSISGNASFVAGAASIFTIGSATAQSAPPNKDGSEYTYRNKKIKIRNWEGQGPCFGDSALWIAENCMATLVVMKDRVQVCMAPGRSFLGVNHFLRMIPNGVMVKLETGMTETYFVWEKSKLKLFENSEIALYTSSNLPKAPDSLVDRFHFDLETLPKTFPAQFFTYKFDKDMQQYVPELGELLCKKAERALCVVSGEYRRVISHHLTYRNPTVAGDCGGLVLAIIEGKCKLVGLHVASDGEEGAASPVPWDPDFKVAQGQSDFLLSYDEWAVPKVLGPGCKAVGIISPEHTVGSGGKTSFLETPIEWQLNRPCGKIPSILVKGDVRLAGTENADYDPFAVGMTKYAKEAGPFEPNGLDRVCESIAETWHDASDGFEFGPVDLEAALNGIENMEYFDALVLSTSEGYPYRLDRKPGEKGKARYVEGEPGNLEITDERILADIHWFEEISKTQVPDLYCIECVKDERLPVRKVIKEPKSRLFTVLPMSYNLAIRKKFLNFVRFIMKRRDVLPCQVGINPYSRQWGKVADRLLEKGNSILCCDYSRFDGFLPKCIMVKIAEMFSNIVGETGAEREQTKNLMLACCSRYAICGRVLYRVENGIPSGFPLTVIVNSILNEILIKYAYWKCFETESLIRDHFDTYVAMVVYGDDNLISVSEAISSKFNGNFLVNFMCNLGIKVTDGVDKTKVGIEFRTIEDCDFLKRKFKENADGTWSGVMAEEHLWPQLHFVKAKKVEMSEAYISNCNNILRELWLGSPEKAAAFRREVISKLKWVEPQRLLTISQVALFHNEQMNGEHPFVEACHQLENLELMAPLEPGMLPIKTQEIMPGLFVASEKNFTGNFDDYFTISITTNRKFEDGKGFQIIFPYGAGRGGLPSKAFMEQNVIRKGCAIQKAFKQGLEKGNKMLFISQSSVIPAYVFAIMLYRSVDRLPRALSNKALTSALGICKKLSYLPKDFPDLF.

Residues 458 to 626 enclose the SF3 helicase domain; that stretch reads LDKLTELHNS…MAYDPGNPCA (169 aa). ATP is bound at residue 487-494; that stretch reads GKSGVGKT. The helical transmembrane segment at 883 to 903 threads the bilayer; sequence LWSISGNASFVAGAASIFTIG. O-(5'-phospho-RNA)-serine is present on Ser-909. The Peptidase C3 domain occupies 935–1137; it reads GPCFGDSALW…ASPVPWDPDF (203 aa). Residues His-975, Glu-1011, and Cys-1100 each act as for picornain 3C-like protease activity in the active site. A RdRp catalytic domain is found at 1417–1544; the sequence is NSILCCDYSR…SVSEAISSKF (128 aa).

Post-translationally, specific enzymatic cleavages by picornain 3C-like protease in vivo yield mature proteins. Picornain 3C-like protease is autocatalytically processed. Uridylylated by the polymerase and is covalently linked to the 5'-end of genomic RNA. This uridylylated form acts as a nucleotide-peptide primer for the polymerase.

Its subcellular location is the host membrane. The protein resides in the host cytoplasm. It localises to the host perinuclear region. It is found in the host endoplasmic reticulum. It carries out the reaction RNA(n) + a ribonucleoside 5'-triphosphate = RNA(n+1) + diphosphate. In terms of biological role, thiol protease that cleaves the RNA1 and RNA2 polyproteins. Plays a role in RNA replication. It is covalently linked to the 5'terminus of both viral single-stranded RNA1 and RNA2 molecules. Functionally, down-regulates the RNA1 polyprotein processing and enhances trans-cleavage of RNA2 polyproteins. The protease cofactor and the putative helicase seem to target the replication complexes to ER membranes. Their physical association causes the membrane rearrangement of host ER that may result in formation of the small membranous vesicles that are the site of viral RNA synthesis. Its function is as follows. The protease cofactor and the putative helicase seem to target the replication complexes to ER membranes. Their physical association causes the membrane rearrangement of host ER that may result in formation of the small membranous vesicles that are the site of viral RNA synthesis. In terms of biological role, replicates the viral genome. In Capsicum annuum (Capsicum pepper), this protein is RNA1 polyprotein (RNA1).